The primary structure comprises 368 residues: Anhydro-N-acetylmuramic acid kinase (368 aa).

13 to 20 provides a ligand contact to ATP; it reads GTSLDGVD.

Belongs to the anhydro-N-acetylmuramic acid kinase family.

It catalyses the reaction 1,6-anhydro-N-acetyl-beta-muramate + ATP + H2O = N-acetyl-D-muramate 6-phosphate + ADP + H(+). Its pathway is amino-sugar metabolism; 1,6-anhydro-N-acetylmuramate degradation. It participates in cell wall biogenesis; peptidoglycan recycling. Functionally, catalyzes the specific phosphorylation of 1,6-anhydro-N-acetylmuramic acid (anhMurNAc) with the simultaneous cleavage of the 1,6-anhydro ring, generating MurNAc-6-P. Is required for the utilization of anhMurNAc either imported from the medium or derived from its own cell wall murein, and thus plays a role in cell wall recycling. The chain is Anhydro-N-acetylmuramic acid kinase from Hahella chejuensis (strain KCTC 2396).